A 298-amino-acid polypeptide reads, in one-letter code: Beta-soluble NSF attachment protein (298 aa).

It belongs to the SNAP family. In terms of assembly, interacts with PRKCABP, and disrupts the interaction between GRIA2 and PRKCABP, leading to the internalization of GRIA2.

The protein resides in the membrane. Its function is as follows. Required for vesicular transport between the endoplasmic reticulum and the Golgi apparatus. The protein is Beta-soluble NSF attachment protein (NAPB) of Homo sapiens (Human).